We begin with the raw amino-acid sequence, 352 residues long: Heat-inducible transcription repressor HrcA (352 aa).

It belongs to the HrcA family.

In terms of biological role, negative regulator of class I heat shock genes (grpE-dnaK-dnaJ and groELS operons). Prevents heat-shock induction of these operons. This chain is Heat-inducible transcription repressor HrcA, found in Latilactobacillus sakei (Lactobacillus sakei).